Here is a 320-residue protein sequence, read N- to C-terminus: Malate dehydrogenase (320 aa).

Residues 10–15 and aspartate 34 each bind NAD(+); that span reads GAGNIG. Arginine 83 and arginine 89 together coordinate substrate. NAD(+) contacts are provided by residues asparagine 96 and 119–121; that span reads ITN. Substrate is bound by residues asparagine 121 and arginine 152. The active-site Proton acceptor is the histidine 176.

The protein belongs to the LDH/MDH superfamily. MDH type 3 family.

The enzyme catalyses (S)-malate + NAD(+) = oxaloacetate + NADH + H(+). Catalyzes the reversible oxidation of malate to oxaloacetate. This is Malate dehydrogenase from Rhizorhabdus wittichii (strain DSM 6014 / CCUG 31198 / JCM 15750 / NBRC 105917 / EY 4224 / RW1) (Sphingomonas wittichii).